Reading from the N-terminus, the 188-residue chain is Elongation factor P (188 aa).

This sequence belongs to the elongation factor P family.

The protein resides in the cytoplasm. The protein operates within protein biosynthesis; polypeptide chain elongation. Functionally, involved in peptide bond synthesis. Stimulates efficient translation and peptide-bond synthesis on native or reconstituted 70S ribosomes in vitro. Probably functions indirectly by altering the affinity of the ribosome for aminoacyl-tRNA, thus increasing their reactivity as acceptors for peptidyl transferase. This Phytoplasma mali (strain AT) protein is Elongation factor P.